A 279-amino-acid polypeptide reads, in one-letter code: Thioredoxin domain-containing protein plp1 (279 aa).

Over residues 56 to 70 (RKEDTQDYNEPELHN) the composition is skewed to basic and acidic residues. The segment at 56–75 (RKEDTQDYNEPELHNSNDPT) is disordered. Residues 137–248 (FLTVENEREV…LEFRLLKSSA (112 aa)) form the Thioredoxin domain. The segment covering 254–267 (EESSSNKSIYHDEL) has biased composition (basic and acidic residues). A disordered region spans residues 254 to 279 (EESSSNKSIYHDELQNNQSDDSDFFE). Residues Ser-272 and Ser-275 each carry the phosphoserine modification.

It belongs to the phosducin family.

It is found in the cytoplasm. The protein localises to the nucleus. Inhibits early G-protein signaling events following pheromone stimulation. May help create heterodimerizable beta-tubulin by facilitating the efficient transfer of nascent beta-tubulin polypeptides to the folding apparatus. The polypeptide is Thioredoxin domain-containing protein plp1 (plp1) (Schizosaccharomyces pombe (strain 972 / ATCC 24843) (Fission yeast)).